A 451-amino-acid polypeptide reads, in one-letter code: DNA polymerase IV (451 aa).

In terms of domain architecture, UmuC spans 5-187 (VIHVDMDAFF…LPVGRLWGVG (183 aa)). Positions 9 and 104 each coordinate Mg(2+). Residue glutamate 105 is part of the active site.

Belongs to the DNA polymerase type-Y family. As to quaternary structure, monomer. Requires Mg(2+) as cofactor.

It localises to the cytoplasm. It catalyses the reaction DNA(n) + a 2'-deoxyribonucleoside 5'-triphosphate = DNA(n+1) + diphosphate. Functionally, poorly processive, error-prone DNA polymerase involved in untargeted mutagenesis. Copies undamaged DNA at stalled replication forks, which arise in vivo from mismatched or misaligned primer ends. These misaligned primers can be extended by PolIV. Exhibits no 3'-5' exonuclease (proofreading) activity. May be involved in translesional synthesis, in conjunction with the beta clamp from PolIII. This is DNA polymerase IV from Corynebacterium diphtheriae (strain ATCC 700971 / NCTC 13129 / Biotype gravis).